Reading from the N-terminus, the 381-residue chain is EPS I polysaccharide export outer membrane protein EpsA (381 aa).

The signal sequence occupies residues 1-23 (MFVSIPNIRKAVVSLSVVPLLAA). Cys24 is lipidated: N-palmitoyl cysteine. The S-diacylglycerol cysteine moiety is linked to residue Cys24.

This sequence belongs to the BexD/CtrA/VexA family.

Its subcellular location is the cell outer membrane. Functionally, probably involved in polymerization and/or export of exopolysaccharide EPS I which functions as a virulence factor. The polypeptide is EPS I polysaccharide export outer membrane protein EpsA (epsA) (Ralstonia nicotianae (strain ATCC BAA-1114 / GMI1000) (Ralstonia solanacearum)).